We begin with the raw amino-acid sequence, 448 residues long: Probable glycine dehydrogenase (decarboxylating) subunit 1 (448 aa).

It belongs to the GcvP family. N-terminal subunit subfamily. As to quaternary structure, the glycine cleavage system is composed of four proteins: P, T, L and H. In this organism, the P 'protein' is a heterodimer of two subunits.

It carries out the reaction N(6)-[(R)-lipoyl]-L-lysyl-[glycine-cleavage complex H protein] + glycine + H(+) = N(6)-[(R)-S(8)-aminomethyldihydrolipoyl]-L-lysyl-[glycine-cleavage complex H protein] + CO2. Its function is as follows. The glycine cleavage system catalyzes the degradation of glycine. The P protein binds the alpha-amino group of glycine through its pyridoxal phosphate cofactor; CO(2) is released and the remaining methylamine moiety is then transferred to the lipoamide cofactor of the H protein. The polypeptide is Probable glycine dehydrogenase (decarboxylating) subunit 1 (Bacillus licheniformis (strain ATCC 14580 / DSM 13 / JCM 2505 / CCUG 7422 / NBRC 12200 / NCIMB 9375 / NCTC 10341 / NRRL NRS-1264 / Gibson 46)).